Consider the following 153-residue polypeptide: NAD(P)H-quinone oxidoreductase subunit N (153 aa).

It belongs to the complex I NdhN subunit family. In terms of assembly, NDH-1 can be composed of about 15 different subunits; different subcomplexes with different compositions have been identified which probably have different functions.

It is found in the cellular thylakoid membrane. It carries out the reaction a plastoquinone + NADH + (n+1) H(+)(in) = a plastoquinol + NAD(+) + n H(+)(out). The enzyme catalyses a plastoquinone + NADPH + (n+1) H(+)(in) = a plastoquinol + NADP(+) + n H(+)(out). In terms of biological role, NDH-1 shuttles electrons from an unknown electron donor, via FMN and iron-sulfur (Fe-S) centers, to quinones in the respiratory and/or the photosynthetic chain. The immediate electron acceptor for the enzyme in this species is believed to be plastoquinone. Couples the redox reaction to proton translocation, and thus conserves the redox energy in a proton gradient. Cyanobacterial NDH-1 also plays a role in inorganic carbon-concentration. The polypeptide is NAD(P)H-quinone oxidoreductase subunit N (Prochlorococcus marinus (strain MIT 9313)).